Here is a 420-residue protein sequence, read N- to C-terminus: Pyruvate dehydrogenase E1 component subunit alpha, mitochondrial (420 aa).

The transit peptide at 1–33 (MLAASFKRQPSQLVRGLGAVLRTPTRIGHVRTM) directs the protein to the mitochondrion. The pyruvate site is built by His-112, Tyr-138, Arg-139, Ala-177, Gly-185, Val-187, Asp-216, Gly-217, Ala-218, Asn-245, and Tyr-247. Residues Tyr-138 and Arg-139 each contribute to the thiamine diphosphate site. Residues Gly-185, Val-187, Asp-216, Gly-217, Ala-218, and Asn-245 each coordinate thiamine diphosphate. Asp-216 lines the Mg(2+) pocket. Asn-245 and Tyr-247 together coordinate Mg(2+). His-312 contacts thiamine diphosphate. Residue Ser-313 is modified to Phosphoserine; by PDK1 and PDK2.

As to quaternary structure, pyruvate dehydrogenase (E1) is a tetramer of 2 alpha and 2 beta subunits. Eukaryotic pyruvate dehydrogenase (PDH) complexes are organized as a core consisting of the oligomeric dihydrolipoamide acetyl-transferase (E2), around which are arranged multiple copies of pyruvate dehydrogenase (E1), dihydrolipoamide dehydrogenase (E3) and protein X (E3BP) bound by non-covalent bonds. Thiamine diphosphate is required as a cofactor. Mg(2+) serves as cofactor. In terms of processing, phosphorylated at Ser-313 by pyruvate dehydrogenase kinases PKP1 (PDK1) and PKP2 (PDK2), and dephosphorylated by pyruvate dehydrogenase phosphatases PTC5 and PTC6.

Its subcellular location is the mitochondrion matrix. The enzyme catalyses N(6)-[(R)-lipoyl]-L-lysyl-[protein] + pyruvate + H(+) = N(6)-[(R)-S(8)-acetyldihydrolipoyl]-L-lysyl-[protein] + CO2. E1 activity is regulated by phosphorylation (inactivation) and dephosphorylation (activation) of the alpha subunit. Functionally, the pyruvate dehydrogenase complex catalyzes the overall conversion of pyruvate to acetyl-CoA and CO(2). This chain is Pyruvate dehydrogenase E1 component subunit alpha, mitochondrial (PDA1), found in Saccharomyces cerevisiae (strain ATCC 204508 / S288c) (Baker's yeast).